The primary structure comprises 421 residues: ATP-dependent RNA helicase RhlB (421 aa).

Positions 9-37 match the Q motif motif; that stretch reads THFADLPINEQVVKALSAANFSHCTPIQA. In terms of domain architecture, Helicase ATP-binding spans 40-216; sequence LPPLLEGNDI…YEHMDNPTHV (177 aa). An ATP-binding site is contributed by 53-60; it reads AQTGTGKT. Residues 162–165 carry the DEAD box motif; sequence DEAD. Positions 240-387 constitute a Helicase C-terminal domain; the sequence is KMALLLSLME…VTEYQADALL (148 aa). A disordered region spans residues 389–421; the sequence is DVTPPKPRHKKRMQNGRNPQKRQSSGSRNRRKP. Polar residues predominate over residues 403-415; it reads NGRNPQKRQSSGS.

This sequence belongs to the DEAD box helicase family. RhlB subfamily. As to quaternary structure, component of the RNA degradosome, which is a multiprotein complex involved in RNA processing and mRNA degradation.

Its subcellular location is the cytoplasm. It catalyses the reaction ATP + H2O = ADP + phosphate + H(+). Functionally, DEAD-box RNA helicase involved in RNA degradation. Has RNA-dependent ATPase activity and unwinds double-stranded RNA. The polypeptide is ATP-dependent RNA helicase RhlB (Pseudoalteromonas atlantica (strain T6c / ATCC BAA-1087)).